The primary structure comprises 488 residues: Protein nucleotidyltransferase YdiU (488 aa).

Residues Gly-91, Gly-93, Arg-94, Lys-114, Asp-126, Gly-127, Arg-177, and Arg-184 each contribute to the ATP site. Residues 108–127 (RFDIQLKGSGPTPYSRRGDG) form a disordered region. The active-site Proton acceptor is Asp-253. Mg(2+) is bound by residues Asn-254 and Asp-263. Position 263 (Asp-263) interacts with ATP.

Belongs to the SELO family. The cofactor is Mg(2+). It depends on Mn(2+) as a cofactor.

The catalysed reaction is L-seryl-[protein] + ATP = 3-O-(5'-adenylyl)-L-seryl-[protein] + diphosphate. It carries out the reaction L-threonyl-[protein] + ATP = 3-O-(5'-adenylyl)-L-threonyl-[protein] + diphosphate. The enzyme catalyses L-tyrosyl-[protein] + ATP = O-(5'-adenylyl)-L-tyrosyl-[protein] + diphosphate. It catalyses the reaction L-histidyl-[protein] + UTP = N(tele)-(5'-uridylyl)-L-histidyl-[protein] + diphosphate. The catalysed reaction is L-seryl-[protein] + UTP = O-(5'-uridylyl)-L-seryl-[protein] + diphosphate. It carries out the reaction L-tyrosyl-[protein] + UTP = O-(5'-uridylyl)-L-tyrosyl-[protein] + diphosphate. Functionally, nucleotidyltransferase involved in the post-translational modification of proteins. It can catalyze the addition of adenosine monophosphate (AMP) or uridine monophosphate (UMP) to a protein, resulting in modifications known as AMPylation and UMPylation. The chain is Protein nucleotidyltransferase YdiU from Bacillus cereus (strain AH820).